The primary structure comprises 242 residues: Ribonuclease 3 2 (242 aa).

The region spanning 12-137 is the RNase III domain; that stretch reads LESLVRKLGL…VLGALYLSTS (126 aa). Position 51 (Glu51) interacts with Mg(2+). The active site involves Asp55. 2 residues coordinate Mg(2+): Asp123 and Glu126. The active site involves Glu126. Residues 165 to 235 enclose the DRBM domain; it reads NYKAALQEWT…AKVAFLAITP (71 aa).

It belongs to the ribonuclease III family. As to quaternary structure, homodimer. Requires Mg(2+) as cofactor.

It localises to the cytoplasm. The enzyme catalyses Endonucleolytic cleavage to 5'-phosphomonoester.. In terms of biological role, digests double-stranded RNA. Involved in the processing of primary rRNA transcript to yield the immediate precursors to the large and small rRNAs (23S and 16S). Processes some mRNAs, and tRNAs when they are encoded in the rRNA operon. Processes pre-crRNA and tracrRNA of type II CRISPR loci if present in the organism. This is Ribonuclease 3 2 (rnc2) from Nostoc sp. (strain PCC 7120 / SAG 25.82 / UTEX 2576).